A 286-amino-acid polypeptide reads, in one-letter code: Small ribosomal subunit protein uS2 (286 aa).

Residues 257-286 (KDNKSNKSNTINADENIKESDLIGGSNNEG) are disordered.

The protein belongs to the universal ribosomal protein uS2 family.

This is Small ribosomal subunit protein uS2 from Ehrlichia ruminantium (strain Gardel).